We begin with the raw amino-acid sequence, 354 residues long: UDP-glucose 4-epimerase GEPI42 (354 aa).

11 to 42 contributes to the NAD(+) binding site; sequence TILVTGGAGFIGSHTVVQLLKQGFHVSIIDNL. Serine 137 lines the substrate pocket. Tyrosine 161 serves as the catalytic Proton acceptor.

This sequence belongs to the NAD(P)-dependent epimerase/dehydratase family. NAD(+) is required as a cofactor.

It carries out the reaction UDP-alpha-D-glucose = UDP-alpha-D-galactose. The protein operates within carbohydrate metabolism; galactose metabolism. This is UDP-glucose 4-epimerase GEPI42 from Cyamopsis tetragonoloba (Guar).